Here is a 301-residue protein sequence, read N- to C-terminus: Ribonuclease HIII (301 aa).

Residues Thr90 to Lys301 enclose the RNase H type-2 domain. A divalent metal cation is bound by residues Asp96, Glu97, and Asp198.

It belongs to the RNase HII family. RnhC subfamily. The cofactor is Mn(2+). It depends on Mg(2+) as a cofactor.

The protein localises to the cytoplasm. The catalysed reaction is Endonucleolytic cleavage to 5'-phosphomonoester.. Endonuclease that specifically degrades the RNA of RNA-DNA hybrids. The polypeptide is Ribonuclease HIII (Protochlamydia amoebophila (strain UWE25)).